Here is a 485-residue protein sequence, read N- to C-terminus: Aspartyl/glutamyl-tRNA(Asn/Gln) amidotransferase subunit B (485 aa).

It belongs to the GatB/GatE family. GatB subfamily. In terms of assembly, heterotrimer of A, B and C subunits.

The catalysed reaction is L-glutamyl-tRNA(Gln) + L-glutamine + ATP + H2O = L-glutaminyl-tRNA(Gln) + L-glutamate + ADP + phosphate + H(+). The enzyme catalyses L-aspartyl-tRNA(Asn) + L-glutamine + ATP + H2O = L-asparaginyl-tRNA(Asn) + L-glutamate + ADP + phosphate + 2 H(+). In terms of biological role, allows the formation of correctly charged Asn-tRNA(Asn) or Gln-tRNA(Gln) through the transamidation of misacylated Asp-tRNA(Asn) or Glu-tRNA(Gln) in organisms which lack either or both of asparaginyl-tRNA or glutaminyl-tRNA synthetases. The reaction takes place in the presence of glutamine and ATP through an activated phospho-Asp-tRNA(Asn) or phospho-Glu-tRNA(Gln). The polypeptide is Aspartyl/glutamyl-tRNA(Asn/Gln) amidotransferase subunit B (Borrelia garinii subsp. bavariensis (strain ATCC BAA-2496 / DSM 23469 / PBi) (Borreliella bavariensis)).